Consider the following 396-residue polypeptide: Putative nickel insertion protein (396 aa).

Belongs to the LarC family.

This Methanosarcina acetivorans (strain ATCC 35395 / DSM 2834 / JCM 12185 / C2A) protein is Putative nickel insertion protein.